A 320-amino-acid chain; its full sequence is L-lactate dehydrogenase A (320 aa).

Substrate-binding residues include arginine 88, asparagine 120, and arginine 151. Position 120 (asparagine 120) interacts with NAD(+). Catalysis depends on histidine 175, which acts as the Proton acceptor.

This sequence belongs to the LDH/MDH superfamily. LDH family. In terms of assembly, homotetramer.

The protein resides in the cytoplasm. It catalyses the reaction (S)-lactate + NAD(+) = pyruvate + NADH + H(+). It participates in fermentation; pyruvate fermentation to lactate; (S)-lactate from pyruvate: step 1/1. Functionally, converts pyruvate to lactate. In Rhizopus oryzae (Mucormycosis agent), this protein is L-lactate dehydrogenase A (LDHA).